Here is a 183-residue protein sequence, read N- to C-terminus: Putative manganese efflux pump MntP (183 aa).

A run of 6 helical transmembrane segments spans residues 6–26 (LFLI…CIGL), 40–60 (IYFG…GFLF), 64–84 (IATM…IIMI), 101–121 (MNII…FTAL), 135–155 (LFIG…SKYL), and 158–178 (IDVI…FFGL).

The protein belongs to the MntP (TC 9.B.29) family.

The protein localises to the cell membrane. In terms of biological role, probably functions as a manganese efflux pump. This is Putative manganese efflux pump MntP from Clostridium tetani (strain Massachusetts / E88).